The chain runs to 190 residues: RNA pyrophosphohydrolase (190 aa).

The Nudix hydrolase domain occupies 6–149; that stretch reads GYRPNVGIIL…KRDVYTQALN (144 aa). The Nudix box signature appears at 38–59; it reads GGIKYGESPVQAMYRELHEEVG. The segment at 167-190 is disordered; that stretch reads QRVHGPRSTDSPSSETDGHAHIAG.

It belongs to the Nudix hydrolase family. RppH subfamily. The cofactor is a divalent metal cation.

In terms of biological role, accelerates the degradation of transcripts by removing pyrophosphate from the 5'-end of triphosphorylated RNA, leading to a more labile monophosphorylated state that can stimulate subsequent ribonuclease cleavage. The chain is RNA pyrophosphohydrolase from Bordetella pertussis (strain Tohama I / ATCC BAA-589 / NCTC 13251).